Reading from the N-terminus, the 249-residue chain is Aquaporin (249 aa).

Residues 1 to 11 (MTRKWIKKLQS) lie on the Cytoplasmic side of the membrane. A helical membrane pass occupies residues 12–32 (YIGEFFASFIFGFAVYTSIIG). The Extracellular segment spans residues 33-39 (SAQTGQS). A helical membrane pass occupies residues 40 to 60 (AGPIIVALTIALSGVAIIYSF). At 61-83 (CDITVAHFNPAITFSAMCFRRLP) the chain is on the cytoplasmic side. The short motif at 69-71 (NPA) is the NPA element. A helical transmembrane segment spans residues 84–104 (FFGGIFIIIFQVAGFIIAGLA). The Extracellular portion of the chain corresponds to 105 to 133 (SVAVLPGKYKNKLEIARPKRVADNVSRGR). The helical transmembrane segment at 134-154 (IFGTEFFLTAILVYVAFAVGV) threads the bilayer. Residues 155–179 (NPYTPPKDEHGDQLDPDEGLTEGRK) lie on the Cytoplasmic side of the membrane. Residues 180 to 200 (ITAPLAIGFTLGFCALLGIAS) form a helical membrane-spanning segment. Over 201-223 (SGGAFNPGIVLSPMILTGTWDFW) the chain is Extracellular. The NPG signature appears at 206–208 (NPG). Residues 224 to 246 (WVYLLGQFSGGLLGGGLQRFLLY) form a helical membrane-spanning segment. At 247–249 (KIF) the chain is on the cytoplasmic side.

It belongs to the MIP/aquaporin (TC 1.A.8) family.

It is found in the cell membrane. Its function is as follows. Water channel required to facilitate the transport of water across membranes. Involved in osmotolerance. This Vairimorpha ceranae (strain BRL01) (Microsporidian parasite) protein is Aquaporin (AQP).